Reading from the N-terminus, the 49-residue chain is MRNKSRGFPNMNNNKFEGEPRAKDDFASKRPDGSTNTHPQERMRASGKR.

The tract at residues M1–R49 is disordered. Basic and acidic residues-rich tracts occupy residues F16 to D32 and P39 to R49.

This sequence belongs to the SspK family.

It is found in the spore core. The sequence is that of Small, acid-soluble spore protein K from Bacillus licheniformis (strain ATCC 14580 / DSM 13 / JCM 2505 / CCUG 7422 / NBRC 12200 / NCIMB 9375 / NCTC 10341 / NRRL NRS-1264 / Gibson 46).